The chain runs to 88 residues: Pigment dispersing factor homolog pdf-1 (88 aa).

An N-terminal signal peptide occupies residues methionine 1 to alanine 21.

It localises to the secreted. Functionally, probable ligand of isoforms a and b of the calcitonin receptor-like protein, pdfr-1, a G-protein coupled receptor. May not signal through isoform c of pdfr-1. Involved in locomotion; more specifically mate searching behavior of males, independent of nutritional status. Involved in regulating the male-specific expression of TGFbeta-like daf-7 in the ASJ chemosensory neurons. Plays a role in circadian rhythms of locomotor activity. Involved in mediating arousal from the sleep-like state called lethargus, which occurs during molting between larval and adult stages, in part by regulating touch sensitivity, and working in concert with neuropeptide flp-2. In the presence of food, plays a role in initiating and extending exploratory roaming behavior, in opposition to 5-hydroxytryptamine (serotonin) signaling. This chain is Pigment dispersing factor homolog pdf-1, found in Caenorhabditis elegans.